The following is a 314-amino-acid chain: Mitochondrial RNA-splicing protein MRS3 (314 aa).

Solcar repeat units lie at residues 31 to 118 (APLY…CKKN), 128 to 210 (HHPF…STKF), and 217 to 310 (YNPL…AKHF). 6 helical membrane-spanning segments follow: residues 33-52 (LYHQ…SVMF), 93-112 (GVQS…FGTY), 130-149 (PFKT…ALMN), 185-204 (SYPT…FVIY), 219-238 (PLIH…AITT), and 285-298 (GWKP…PATA).

This sequence belongs to the mitochondrial carrier (TC 2.A.29) family.

It is found in the mitochondrion inner membrane. MRS3 suppresses a mitochondrial splice defect in the first intron of the COB gene. It may act as a carrier, exerting its suppressor activity via modulation of solute concentrations in the mitochondrion (possibly of cations). This is Mitochondrial RNA-splicing protein MRS3 (MRS3) from Saccharomyces cerevisiae (strain ATCC 204508 / S288c) (Baker's yeast).